We begin with the raw amino-acid sequence, 99 residues long: Defensin-like protein 2 (99 aa).

A signal peptide spans 1–30 (MAMAKKSVSSFTLIFILVLVIFEVPEIKAQ). 4 disulfide bridges follow: Cys34–Cys86, Cys47–Cys71, Cys56–Cys81, and Cys60–Cys83. A propeptide spanning residues 94-99 (ILRGGI) is cleaved from the precursor.

This sequence belongs to the DEFL family. Protease inhibitor I18 (RTI/MTI-2) subfamily.

Its subcellular location is the secreted. Functionally, inhibits bovine beta-trypsin and alpha-chymotrypsin on a 1:1 molar basis. The protein is Defensin-like protein 2 of Sinapis alba (White mustard).